A 472-amino-acid polypeptide reads, in one-letter code: UDP-N-acetylmuramate--L-alanine ligase (472 aa).

Glycine 122 to threonine 128 serves as a coordination point for ATP.

It belongs to the MurCDEF family.

It is found in the cytoplasm. It catalyses the reaction UDP-N-acetyl-alpha-D-muramate + L-alanine + ATP = UDP-N-acetyl-alpha-D-muramoyl-L-alanine + ADP + phosphate + H(+). Its pathway is cell wall biogenesis; peptidoglycan biosynthesis. In terms of biological role, cell wall formation. The polypeptide is UDP-N-acetylmuramate--L-alanine ligase (Myxococcus xanthus (strain DK1622)).